A 160-amino-acid polypeptide reads, in one-letter code: SsrA-binding protein (160 aa).

This sequence belongs to the SmpB family.

The protein resides in the cytoplasm. Its function is as follows. Required for rescue of stalled ribosomes mediated by trans-translation. Binds to transfer-messenger RNA (tmRNA), required for stable association of tmRNA with ribosomes. tmRNA and SmpB together mimic tRNA shape, replacing the anticodon stem-loop with SmpB. tmRNA is encoded by the ssrA gene; the 2 termini fold to resemble tRNA(Ala) and it encodes a 'tag peptide', a short internal open reading frame. During trans-translation Ala-aminoacylated tmRNA acts like a tRNA, entering the A-site of stalled ribosomes, displacing the stalled mRNA. The ribosome then switches to translate the ORF on the tmRNA; the nascent peptide is terminated with the 'tag peptide' encoded by the tmRNA and targeted for degradation. The ribosome is freed to recommence translation, which seems to be the essential function of trans-translation. The chain is SsrA-binding protein from Klebsiella pneumoniae (strain 342).